A 938-amino-acid chain; its full sequence is Translation initiation factor IF-2 (938 aa).

A compositionally biased stretch (basic and acidic residues) spans 57 to 205 (DKSKKVASKE…PKSEETKSEE (149 aa)). Residues 57–350 (DKSKKVASKE…RSADDLAQQE (294 aa)) form a disordered region. Acidic residues predominate over residues 206–215 (TTEGGESEEK). The segment covering 248 to 259 (KKEEKKEDDKKD) has biased composition (basic and acidic residues). 2 stretches are compositionally biased toward basic residues: residues 260–270 (KDRRKKRRRRI) and 285–296 (GAKKGGRTRSKP). The segment covering 297–319 (ITKEEPTEEEVQKQVRETLEKLQ) has biased composition (basic and acidic residues). Positions 323-333 (SKGKGAKYRRQ) are enriched in basic residues. A compositionally biased stretch (basic and acidic residues) spans 334-344 (KRDEHRQRSAD). Residues 434 to 602 (TRAPIVTVMG…KVLLEAEILE (169 aa)) enclose the tr-type G domain. Residues 443–450 (GHVDHGKT) form a G1 region. 443–450 (GHVDHGKT) lines the GTP pocket. The tract at residues 468-472 (GITQH) is G2. Residues 490–493 (DTPG) form a G3 region. Residues 490 to 494 (DTPGH) and 544 to 547 (NKSD) each bind GTP. Positions 544–547 (NKSD) are G4. The segment at 580-582 (SAK) is G5.

The protein belongs to the TRAFAC class translation factor GTPase superfamily. Classic translation factor GTPase family. IF-2 subfamily.

Its subcellular location is the cytoplasm. In terms of biological role, one of the essential components for the initiation of protein synthesis. Protects formylmethionyl-tRNA from spontaneous hydrolysis and promotes its binding to the 30S ribosomal subunits. Also involved in the hydrolysis of GTP during the formation of the 70S ribosomal complex. The chain is Translation initiation factor IF-2 from Christiangramia forsetii (strain DSM 17595 / CGMCC 1.15422 / KT0803) (Gramella forsetii).